The primary structure comprises 335 residues: Polyprenol dehydrogenase (335 aa).

NAD(+) contacts are provided by I55, Y208, K212, and T245. Y208 acts as the Proton acceptor in catalysis.

The protein belongs to the short-chain dehydrogenases/reductases (SDR) family.

Its subcellular location is the lipid droplet. It localises to the secreted. It catalyses the reaction a di-trans,poly-cis-polyprenol + NAD(+) = a di-trans,poly-cis-polyprenal + NADH + H(+). The enzyme catalyses a di-trans,poly-cis-polyprenol + NADP(+) = a di-trans,poly-cis-polyprenal + NADPH + H(+). It carries out the reaction a di-trans,poly-cis-dolichol + NADP(+) = a di-trans,poly-cis-dolichal + NADPH + H(+). The catalysed reaction is a di-trans,poly-cis-dolichol + NAD(+) = a di-trans,poly-cis-dolichal + NADH + H(+). The protein operates within protein modification; protein glycosylation. In terms of biological role, oxidoreductase that plays a key role in early steps of protein N-linked glycosylation by mediating two non-consecutive steps in dolichol biosynthesis. Acts both as a NAD(+)-dependent dehydrogenase and as a NADPH-dependent reductase during the conversion of polyprenol into dolichol. First catalyzes the NAD(+)-dependent dehydrogenation of polyprenol into polyprenal; polyprenal is then reduced into dolichal by SRD5A3. It then catalyzes the NADPH-dependent reduction of dolichal into dolichol. May also acts as a positive regulator of starvation-induced autophagy. This is Polyprenol dehydrogenase (Dhrsx) from Mus musculus (Mouse).